The chain runs to 80 residues: Waprin-Phi3 (80 aa).

A signal peptide spans Met-1 to Ala-22. Residues Pro-31 to Gly-78 form the WAP domain. 4 cysteine pairs are disulfide-bonded: Cys-38-Cys-66, Cys-49-Cys-70, Cys-53-Cys-65, and Cys-59-Cys-74.

It belongs to the venom waprin family. Expressed by the venom gland.

It is found in the secreted. Functionally, damages membranes of susceptible bacteria. Has no hemolytic activity. Not toxic to mice. Does not inhibit the proteinases elastase and cathepsin G. The chain is Waprin-Phi3 from Philodryas olfersii (Green snake).